Consider the following 90-residue polypeptide: Envelope protein US9 homolog (90 aa).

The Intravirion segment spans residues 1–63 (MEPLRLADAE…IRRRRRQTRA (63 aa)). Residues 12–13 (LL) carry the Di-leucine internalization motif motif. Residues 29–38 (EAYYTESDDE) form an acidic region. Residues 64-84 (AGFVAAFVLVALISGGLGALM) traverse the membrane as a helical; Signal-anchor for type II membrane protein segment. Over 85-90 (CWLAYR) the chain is Virion surface.

It belongs to the alphaherpesvirinae envelope protein US9 family. Post-translationally, phosphorylated on serines within the acidic cluster. Phosphorylation determines whether endocytosed viral US9 traffics to the trans-Golgi network or recycles to the cell membrane.

The protein localises to the virion membrane. It localises to the host Golgi apparatus membrane. It is found in the host smooth endoplasmic reticulum membrane. Its subcellular location is the host cell membrane. In terms of biological role, essential for the anterograde spread of the infection throughout the host nervous system. Together with the gE/gI heterodimer, US9 is involved in the sorting and transport of viral structural components toward axon tips. The sequence is that of Envelope protein US9 homolog from Cercopithecine herpesvirus 1 (CeHV-1).